A 321-amino-acid chain; its full sequence is Phospholipid phosphatase-related protein type 5 (321 aa).

The next 6 membrane-spanning stretches (helical) occupy residues 6-26 (VALISSMLYFQMVIMAGTVML), 62-82 (AVPPVLLYSLAAGVPVLVIIV), 122-142 (FLGIYAFGLFATDIFVNAGQV), 196-213 (AALSVYAATYLTMYITST), 225-245 (VLCLGLMCLAFLTGLNRVAEY), and 252-272 (VIAGFLVGISIAVFLVVCVVN).

It belongs to the PA-phosphatase related phosphoesterase family.

The protein resides in the cell membrane. In terms of biological role, induces filopodia formation and promotes neurite growth in a CDC42-independent manner; impedes neurite growth inhibitory-mediated axonal retraction. This Mus musculus (Mouse) protein is Phospholipid phosphatase-related protein type 5.